The sequence spans 520 residues: MDIITIIIAVIAGIGGGFGISKFLEKSGVSNLIKNAKKEASSILKDANLEGENIKKDKILQAKEKFIELKSEHEQVILTRDRKVAEVEKRVRDKESQVSGELSKAKKINDDFEAKTNEYNTKLENLEKKQVEVEKMHKSQLQQLEVISGLSTEEAKNQLIEGLKSEAKTQAMAHIQETIEEAKLTAQQEAKKIIISTIQRVGTEEAVENCVSVFNIESDDVKGRIIGREGRNIRAIEAATGVEIIVDDTPEAIILSCFDPVRREIARLALHKLVTDGRIHPARIEEVVAKTTKQIDDEIIEVGKRTVIDLGIHGLHPELIKVVGRMKYRSSYGQNLLQHSREVSKLCGIMAAELGLNVKLAKRAGLLHDIGKVPDAESDLPHALLGMQWAEKYGEKEEVCNAIGAHHDEIEMKSLLSPIVQVCDAISGARPGARRQVLDSYIQRLKDLEEVAYGFNGVKSAYAIQAGRELRVIVESEKVSDDNASNLSFEISQKIQTEMTYPGQVKVTVIRETRAVNIAK.

The chain crosses the membrane as a helical span at residues 1–21; sequence MDIITIIIAVIAGIGGGFGIS. Positions 210–276 constitute a KH domain; that stretch reads CVSVFNIESD…RLALHKLVTD (67 aa). The HD domain maps to 336 to 429; sequence LLQHSREVSK…VQVCDAISGA (94 aa).

The protein belongs to the RNase Y family.

It localises to the cell membrane. Endoribonuclease that initiates mRNA decay. The protein is Ribonuclease Y of Flavobacterium psychrophilum (strain ATCC 49511 / DSM 21280 / CIP 103535 / JIP02/86).